The chain runs to 199 residues: Holliday junction branch migration complex subunit RuvA (199 aa).

The interval M1 to A64 is domain I. The interval R65–P143 is domain II. The tract at residues A144–S146 is flexible linker. The domain III stretch occupies residues A147 to K199.

Belongs to the RuvA family. Homotetramer. Forms an RuvA(8)-RuvB(12)-Holliday junction (HJ) complex. HJ DNA is sandwiched between 2 RuvA tetramers; dsDNA enters through RuvA and exits via RuvB. An RuvB hexamer assembles on each DNA strand where it exits the tetramer. Each RuvB hexamer is contacted by two RuvA subunits (via domain III) on 2 adjacent RuvB subunits; this complex drives branch migration. In the full resolvosome a probable DNA-RuvA(4)-RuvB(12)-RuvC(2) complex forms which resolves the HJ.

It is found in the cytoplasm. Its function is as follows. The RuvA-RuvB-RuvC complex processes Holliday junction (HJ) DNA during genetic recombination and DNA repair, while the RuvA-RuvB complex plays an important role in the rescue of blocked DNA replication forks via replication fork reversal (RFR). RuvA specifically binds to HJ cruciform DNA, conferring on it an open structure. The RuvB hexamer acts as an ATP-dependent pump, pulling dsDNA into and through the RuvAB complex. HJ branch migration allows RuvC to scan DNA until it finds its consensus sequence, where it cleaves and resolves the cruciform DNA. The polypeptide is Holliday junction branch migration complex subunit RuvA (Sphingopyxis alaskensis (strain DSM 13593 / LMG 18877 / RB2256) (Sphingomonas alaskensis)).